We begin with the raw amino-acid sequence, 147 residues long: Hemoglobin subunit gamma-2 (147 aa).

The Globin domain maps to His3–His147. At Thr13 the chain carries Phosphothreonine. Phosphoserine is present on residues Ser45, Ser51, and Ser53. At Lys60 the chain carries N6-acetyllysine. Residue His64 participates in heme b binding. At Lys83 the chain carries N6-acetyllysine. Position 93 (His93) interacts with heme b. Cys94 carries the post-translational modification S-nitrosocysteine. Ser140, Ser143, and Ser144 each carry phosphoserine.

Belongs to the globin family. As to quaternary structure, heterotetramer of two alpha chains and two gamma chains in fetal hemoglobin (Hb F). Red blood cells.

Functionally, gamma chains make up the fetal hemoglobin F, in combination with alpha chains. The chain is Hemoglobin subunit gamma-2 (HBG2) from Gorilla gorilla gorilla (Western lowland gorilla).